The following is a 505-amino-acid chain: Lysine--tRNA ligase (505 aa).

Mg(2+) is bound by residues Glu-415 and Glu-422.

This sequence belongs to the class-II aminoacyl-tRNA synthetase family. Homodimer. Mg(2+) is required as a cofactor.

It localises to the cytoplasm. The catalysed reaction is tRNA(Lys) + L-lysine + ATP = L-lysyl-tRNA(Lys) + AMP + diphosphate. The chain is Lysine--tRNA ligase from Cronobacter sakazakii (strain ATCC BAA-894) (Enterobacter sakazakii).